Consider the following 406-residue polypeptide: Subtilisin-like protease CPC735_023170 (406 aa).

A signal peptide spans 1 to 20 (MRLFQSTCVLVGTVLPLFTA). A propeptide spanning residues 21-118 (FPISSPREIE…VEPDSMAYVT (98 aa)) is cleaved from the precursor. The Inhibitor I9 domain occupies 35-115 (KYIITFKKGI…VESVEPDSMA (81 aa)). The N-linked (GlcNAc...) asparagine glycan is linked to asparagine 125. The region spanning 127–406 (TYGPRRISHR…NKLAYNGSGK (280 aa)) is the Peptidase S8 domain. Catalysis depends on charge relay system residues aspartate 161 and histidine 192. Asparagine 239 carries an N-linked (GlcNAc...) asparagine glycan. Residues 283–309 (NDGRDAGRNSPGSAPESITVGSINSRR) form a disordered region. A glycan (N-linked (GlcNAc...) asparagine) is linked at asparagine 346. The active-site Charge relay system is serine 351. Residue asparagine 402 is glycosylated (N-linked (GlcNAc...) asparagine).

The protein belongs to the peptidase S8 family.

Its subcellular location is the secreted. Its function is as follows. Secreted subtilisin-like serine protease with keratinolytic activity that contributes to pathogenicity. This Coccidioides posadasii (strain C735) (Valley fever fungus) protein is Subtilisin-like protease CPC735_023170.